We begin with the raw amino-acid sequence, 394 residues long: HORMA domain-containing protein 1 (394 aa).

The HORMA domain occupies 24–226 (HQSLVLVKRL…TPFHIFKVKV (203 aa)). A disordered region spans residues 252–394 (KILRDKDVED…RKFSEPKEHI (143 aa)). Residues 253–282 (ILRDKDVEDEQEHYTSDDLDMETKMEEQEK) show a composition bias toward basic and acidic residues. 2 stretches are compositionally biased toward polar residues: residues 310–324 (LSISHSQVEQLVNKT) and 343–352 (KMANGNQPVK). The segment covering 362–374 (QHESGRRVLHHFD) has biased composition (basic and acidic residues). Ser-376 carries the phosphoserine modification. The Nuclear localization signal signature appears at 383–386 (KRRK).

In terms of assembly, interacts with HORMAD2. Interacts with IHO1. Post-translationally, phosphorylated at Ser-377 in a SPO11-dependent manner.

It localises to the nucleus. It is found in the chromosome. Functionally, plays a key role in meiotic progression. Regulates 3 different functions during meiosis: ensures that sufficient numbers of processed DNA double-strand breaks (DSBs) are available for successful homology search by increasing the steady-state numbers of single-stranded DSB ends. Promotes synaptonemal-complex formation independently of its role in homology search. Plays a key role in the male mid-pachytene checkpoint and the female meiotic prophase checkpoint: required for efficient build-up of ATR activity on unsynapsed chromosome regions, a process believed to form the basis of meiotic silencing of unsynapsed chromatin (MSUC) and meiotic prophase quality control in both sexes. This is HORMA domain-containing protein 1 (HORMAD1) from Macaca fascicularis (Crab-eating macaque).